We begin with the raw amino-acid sequence, 336 residues long: Ketol-acid reductoisomerase (NADP(+)) (336 aa).

The KARI N-terminal Rossmann domain maps to 1 to 181 (MKVYYDQDAD…GGGRSGIIET (181 aa)). NADP(+) contacts are provided by residues 24–27 (YGSQ), arginine 47, serine 50, and serine 52. Residue histidine 107 is part of the active site. Position 133 (glycine 133) interacts with NADP(+). The region spanning 182 to 327 (SFREETETDL…ERLRGMMPWI (146 aa)) is the KARI C-terminal knotted domain. The Mg(2+) site is built by aspartate 190, glutamate 194, glutamate 226, and glutamate 230. Residue serine 251 participates in substrate binding.

This sequence belongs to the ketol-acid reductoisomerase family. Mg(2+) serves as cofactor.

The enzyme catalyses (2R)-2,3-dihydroxy-3-methylbutanoate + NADP(+) = (2S)-2-acetolactate + NADPH + H(+). The catalysed reaction is (2R,3R)-2,3-dihydroxy-3-methylpentanoate + NADP(+) = (S)-2-ethyl-2-hydroxy-3-oxobutanoate + NADPH + H(+). It participates in amino-acid biosynthesis; L-isoleucine biosynthesis; L-isoleucine from 2-oxobutanoate: step 2/4. It functions in the pathway amino-acid biosynthesis; L-valine biosynthesis; L-valine from pyruvate: step 2/4. In terms of biological role, involved in the biosynthesis of branched-chain amino acids (BCAA). Catalyzes an alkyl-migration followed by a ketol-acid reduction of (S)-2-acetolactate (S2AL) to yield (R)-2,3-dihydroxy-isovalerate. In the isomerase reaction, S2AL is rearranged via a Mg-dependent methyl migration to produce 3-hydroxy-3-methyl-2-ketobutyrate (HMKB). In the reductase reaction, this 2-ketoacid undergoes a metal-dependent reduction by NADPH to yield (R)-2,3-dihydroxy-isovalerate. The sequence is that of Ketol-acid reductoisomerase (NADP(+)) from Halorhodospira halophila (strain DSM 244 / SL1) (Ectothiorhodospira halophila (strain DSM 244 / SL1)).